The following is a 146-amino-acid chain: Myoglobin (146 aa).

A Globin domain is found at 2–140 (ADLDAVLKCW…VIADLEANYK (139 aa)). H59 is a binding site for nitrite. H59 provides a ligand contact to O2. H88 contributes to the heme b binding site.

It belongs to the globin family. In terms of assembly, monomeric.

It localises to the cytoplasm. The protein localises to the sarcoplasm. It catalyses the reaction Fe(III)-heme b-[protein] + nitric oxide + H2O = Fe(II)-heme b-[protein] + nitrite + 2 H(+). The enzyme catalyses H2O2 + AH2 = A + 2 H2O. Its function is as follows. Monomeric heme protein which primary function is to store oxygen and facilitate its diffusion within muscle tissues. Reversibly binds oxygen through a pentacoordinated heme iron and enables its timely and efficient release as needed during periods of heightened demand. Depending on the oxidative conditions of tissues and cells, and in addition to its ability to bind oxygen, it also has a nitrite reductase activity whereby it regulates the production of bioactive nitric oxide. Under stress conditions, like hypoxia and anoxia, it also protects cells against reactive oxygen species thanks to its pseudoperoxidase activity. The polypeptide is Myoglobin (mb) (Katsuwonus pelamis (Skipjack tuna)).